The sequence spans 305 residues: Glutaminase (305 aa).

7 residues coordinate substrate: serine 61, asparagine 113, glutamate 158, asparagine 165, tyrosine 189, tyrosine 241, and valine 259.

It belongs to the glutaminase family. As to quaternary structure, homotetramer.

It carries out the reaction L-glutamine + H2O = L-glutamate + NH4(+). This Clostridium botulinum (strain 657 / Type Ba4) protein is Glutaminase.